Here is a 157-residue protein sequence, read N- to C-terminus: Protein Smg homolog (157 aa).

Belongs to the Smg family.

This Aliivibrio fischeri (strain ATCC 700601 / ES114) (Vibrio fischeri) protein is Protein Smg homolog.